Here is a 266-residue protein sequence, read N- to C-terminus: MGAGLVSACLPISYVLLVHLFDRNGTDRNDPESVKRRFKGALLSNFVSIVVTAFYLRDYTDSPMLEMGVRWDNIGQSITYPFILMNAFYLGQFVMMQIDRTLWHYFDWYEWKLCFNSWVWRRDIIVGPITEEIVFRACSSTLMAHVYGPTMTILLNPIPFAASHFHHIWDDQRRGYSLAHSILQRGFQFCYTYLFGAFATWLQLTTRHAIVPIIAHAFCNAQGLPLWLEIPNYPKRRDRLTLYAAYSVGFAAFVHLLYTRNGMPTP.

A run of 3 helical transmembrane segments spans residues 1–21, 42–59, and 78–98; these read MGAG…VHLF, LLSN…LRDY, and ITYP…MMQI. Catalysis depends on proton donor/acceptor residues glutamate 131 and histidine 164. 3 helical membrane-spanning segments follow: residues 186–206, 210–230, and 239–259; these read GFQF…QLTT, IVPI…WLEI, and RLTL…LLYT.

Belongs to the peptidase U48 family.

It is found in the endoplasmic reticulum membrane. The protein resides in the membrane. It carries out the reaction Hydrolyzes the peptide bond -P2-(S-farnesyl or geranylgeranyl)C-P1'-P2'-P3'-COOH where P1' and P2' are amino acids with aliphatic sidechains and P3' is any C-terminal residue.. Protease involved in the processing of a variety of prenylated proteins containing the C-terminal CAAX motif, where C is a cysteine modified with an isoprenoid lipid, A is an aliphatic amino acid and X is any C-terminal amino acid. Proteolytically removes the C-terminal three residues of farnesylated and geranylated proteins, leaving the prenylated cysteine as the new C-terminus. The polypeptide is CAAX prenyl protease 2 (Caenorhabditis elegans).